Reading from the N-terminus, the 532-residue chain is Cyclin-L1 (532 aa).

2 cyclin-like regions span residues 94 to 196 and 209 to 293; these read ELIQ…RVLK and KIIV…ETLR. Residue Thr331 is modified to Phosphothreonine. The interval 332-532 is disordered; sequence PALSTLGGFS…SRSGHGRHRR (201 aa). Ser341 and Ser344 each carry phosphoserine. Residues Lys345 and Lys353 each participate in a glycyl lysine isopeptide (Lys-Gly) (interchain with G-Cter in SUMO2) cross-link. The span at 348–358 shows a compositional bias: basic and acidic residues; the sequence is SPREVKAEEKS. 2 positions are modified to phosphoserine: Ser358 and Ser361. The segment covering 367–376 has biased composition (basic and acidic residues); that stretch reads VKKEPEDRQQ. Lys368 participates in a covalent cross-link: Glycyl lysine isopeptide (Lys-Gly) (interchain with G-Cter in SUMO2). At Ser380 the chain carries Phosphoserine. Basic residues-rich tracts occupy residues 388–424, 444–458, 466–482, and 492–504; these read DSKR…RRSR, RRHH…KAKH, SNRH…RSQS, and KKHR…HRDR. Positions 396-438 are RS; the sequence is RSASRSRSRTRSRSRSHSPRRHYNNRRSRSGTYSSRSRSRSRS. Position 451 is a phosphoserine (Ser451). Basic and acidic residues predominate over residues 505–514; the sequence is RERSRSFERS. Residues 515–532 show a composition bias toward basic residues; it reads HKGKHHGGSRSGHGRHRR.

The protein belongs to the cyclin family. Cyclin L subfamily. Interacts with POLR2A via its hyperphosphorylated C-terminal domain (CTD). Interacts with CDK11A, CDK11B, CDK12 and CDK13. May form a ternary complex with CDK11B and casein kinase II (CKII). Interacts with pre-mRNA-splicing factors, including at least SRSF1, SRSF2 and SRSF7/SLU7. In terms of tissue distribution, widely expressed (at protein level).

The protein localises to the nucleus speckle. It is found in the nucleus. Its subcellular location is the nucleoplasm. The protein resides in the cytoplasm. Functionally, involved in pre-mRNA splicing. Functions in association with cyclin-dependent kinases (CDKs). May play a role in the regulation of RNA polymerase II (pol II). Inhibited by the CDK-specific inhibitor CDKN1A/p21. The protein is Cyclin-L1 (Ccnl1) of Mus musculus (Mouse).